The chain runs to 269 residues: uncharacterized protein (269 aa).

Residues 12–19 and 130–137 contribute to the ATP site; these read GKGGTGKS and GYLIVGKS.

It to M.jannaschii MJ0578.

This is an uncharacterized protein from Methanocaldococcus jannaschii (strain ATCC 43067 / DSM 2661 / JAL-1 / JCM 10045 / NBRC 100440) (Methanococcus jannaschii).